Consider the following 277-residue polypeptide: MPLTPTATRELLAQLGHQPKRFLGQNFLVDGNIVRKSLELAQVRRGDAVVEIGPGLGTLTGALLEAGAEVWAVEKDRTLHAHLSSTLQPRHPDTFHLLEADAVEHPLADLPAAHAAAFKIVANLPYAIATPWLDAVLGGPLPERMVLMLQQEAAQRYVAMPGSKSFGAISVFLQSAYEVAPGHRVEASCFFPRPDVDSYLLHLVRRAEPFVFTPEVKALIRSVFQQRRKQIGGLLRDRLPDHGASWLARLTAAGLSSLTRPEAIPTELWRALQVRES.

Positions 26, 28, 53, 74, 101, and 123 each coordinate S-adenosyl-L-methionine.

Belongs to the class I-like SAM-binding methyltransferase superfamily. rRNA adenine N(6)-methyltransferase family. RsmA subfamily.

Its subcellular location is the cytoplasm. The catalysed reaction is adenosine(1518)/adenosine(1519) in 16S rRNA + 4 S-adenosyl-L-methionine = N(6)-dimethyladenosine(1518)/N(6)-dimethyladenosine(1519) in 16S rRNA + 4 S-adenosyl-L-homocysteine + 4 H(+). In terms of biological role, specifically dimethylates two adjacent adenosines (A1518 and A1519) in the loop of a conserved hairpin near the 3'-end of 16S rRNA in the 30S particle. May play a critical role in biogenesis of 30S subunits. The chain is Ribosomal RNA small subunit methyltransferase A from Opitutus terrae (strain DSM 11246 / JCM 15787 / PB90-1).